Reading from the N-terminus, the 71-residue chain is uncharacterized protein (71 aa).

Over residues 1–16 the composition is skewed to basic residues; that stretch reads MAKSQAKKKRGHRLRN. 2 disordered regions span residues 1 to 39 and 51 to 71; these read MAKS…RMTK and KNPY…QKAA. The segment covering 25-35 has biased composition (polar residues); the sequence is RGSTPSFSTHG. Residues 51 to 64 show a composition bias toward basic and acidic residues; that stretch reads KNPYDHTAVDDKDF.

This is an uncharacterized protein from Bacillus subtilis (strain 168).